The following is a 561-amino-acid chain: Malto-oligosyltrehalose trehalohydrolase (561 aa).

Position 253 to 258 (253 to 258 (RLDAVH)) interacts with substrate. Asp255 acts as the Nucleophile in catalysis. Catalysis depends on Glu286, which acts as the Proton donor. Substrate contacts are provided by residues 311-315 (DDFHH) and 379-384 (HDQVGN).

This sequence belongs to the glycosyl hydrolase 13 family. In terms of assembly, homodimer.

It localises to the cytoplasm. The catalysed reaction is hydrolysis of (1-&gt;4)-alpha-D-glucosidic linkage in 4-alpha-D-[(1-&gt;4)-alpha-D-glucanosyl]n trehalose to yield trehalose and (1-&gt;4)-alpha-D-glucan.. The protein operates within glycan biosynthesis; trehalose biosynthesis. The protein is Malto-oligosyltrehalose trehalohydrolase (treZ) of Saccharolobus solfataricus (strain ATCC 35092 / DSM 1617 / JCM 11322 / P2) (Sulfolobus solfataricus).